We begin with the raw amino-acid sequence, 311 residues long: Ribosomal RNA small subunit methyltransferase H 1 (311 aa).

Residues 33–35 (AGH), Asp53, Phe80, Asp101, and Gln108 each bind S-adenosyl-L-methionine.

Belongs to the methyltransferase superfamily. RsmH family.

The protein resides in the cytoplasm. The enzyme catalyses cytidine(1402) in 16S rRNA + S-adenosyl-L-methionine = N(4)-methylcytidine(1402) in 16S rRNA + S-adenosyl-L-homocysteine + H(+). Specifically methylates the N4 position of cytidine in position 1402 (C1402) of 16S rRNA. The chain is Ribosomal RNA small subunit methyltransferase H 1 from Alkaliphilus metalliredigens (strain QYMF).